The chain runs to 359 residues: Olfactory receptor 8S1 (359 aa).

Residues 1 to 25 (MALGNHSTITEFLLLGLSADPNIRA) lie on the Extracellular side of the membrane. Asparagine 5 is a glycosylation site (N-linked (GlcNAc...) asparagine). A helical transmembrane segment spans residues 26 to 46 (LLFVLFLGIYLLTIMENLMLL). Residues 47-54 (LMIRADSC) lie on the Cytoplasmic side of the membrane. A helical membrane pass occupies residues 55–75 (LHKPMYFFLSHLSFVDLCFSS). Over 76–99 (VIVPKMLENLLSQRKTISVEGCLA) the chain is Extracellular. An intrachain disulfide couples cysteine 97 to cysteine 189. A helical transmembrane segment spans residues 100–120 (QVFFVFVTAGTEACLLSGMAY). Residues 121-139 (DRHAAICRPLLYGQIMGKQ) lie on the Cytoplasmic side of the membrane. A helical membrane pass occupies residues 140–160 (LYMHLVWGSWGLGFLDALINV). The Extracellular segment spans residues 161–197 (LLAVNMVFCEAKIIHHYSYEMPSLLPLSCSDISRSLI). A helical membrane pass occupies residues 198-217 (ALLCSTLLHGLGNFLLVFLS). The Cytoplasmic portion of the chain corresponds to 218–237 (YTRIISTILSISSTSGRSKA). The helical transmembrane segment at 238 to 258 (FSTCSAHLTAVTLYYGSGLLR) threads the bilayer. At 259–269 (HLMPNSGSPIE) the chain is on the extracellular side. A helical transmembrane segment spans residues 270–290 (LIFSVQYTVVTPMLNSLIYSL). Residues 291–359 (KNKEVKGERS…ALRAAPTALP (69 aa)) are Cytoplasmic-facing. The interval 301 to 338 (LRDSSHLPQLHKGQARWKRPAFTEGRREPGHPELSIPV) is disordered.

Belongs to the G-protein coupled receptor 1 family.

The protein resides in the cell membrane. Its function is as follows. Odorant receptor. This Homo sapiens (Human) protein is Olfactory receptor 8S1 (OR8S1).